Reading from the N-terminus, the 917-residue chain is Nitrate reductase [NADH] 2 (917 aa).

Positions 1-72 are disordered; that stretch reads MAASVDNRQY…SEDENETHNS (72 aa). The span at 37-47 shows a compositional bias: polar residues; it reads AHQNQTTNQTV. Over residues 57–67 the composition is skewed to acidic residues; that stretch reads DDEDVSSEDEN. Residue C191 coordinates Mo-molybdopterin. Residues 542–617 form the Cytochrome b5 heme-binding domain; that stretch reads AKMYSMSEVK…LEDYRIGELI (76 aa). Heme-binding residues include H577 and H600. An FAD-binding FR-type domain is found at 660–772; sequence RAKVPVQLVE…KGPLGHVEYL (113 aa). Residues 712–715, 729–733, F734, F741, 746–748, and T799 contribute to the FAD site; these read RAYT, VVKIY, and LMS.

It belongs to the nitrate reductase family. In terms of assembly, homodimer. The cofactor is FAD. Heme is required as a cofactor. It depends on Mo-molybdopterin as a cofactor. Root, leaf, and shoot.

The enzyme catalyses nitrite + NAD(+) + H2O = nitrate + NADH + H(+). Nitrate reductase is a key enzyme involved in the first step of nitrate assimilation in plants, fungi and bacteria. In Arabidopsis thaliana (Mouse-ear cress), this protein is Nitrate reductase [NADH] 2 (NIA2).